A 251-amino-acid polypeptide reads, in one-letter code: Aquaporin (251 aa).

Residues 1–11 (MAKEALKTLQS) lie on the Cytoplasmic side of the membrane. The helical transmembrane segment at 12-32 (MFGEMVASFVFGFAVYSAILG) threads the bilayer. Residues 33 to 42 (SSISQSSADK) are Extracellular-facing. A helical transmembrane segment spans residues 43–63 (VIVGLTVGFSGIGVIYSFCDV). Residues 64–86 (TIAHFNPAITLAAILTSKIDVLQ) are Cytoplasmic-facing. The NPA motif lies at 69–71 (NPA). A helical membrane pass occupies residues 87–107 (GLGYMLAQYIGFMLAVCALLV). Over 108–133 (CSPVEYKETLDTIRPGPTDFGATSLN) the chain is Extracellular. Residues 134-154 (VFFAEFFLTAIFVHIVFATAV) form a helical membrane-spanning segment. Residues 155–179 (NPYKPKVDTEGKFVDPDEKEPVDRR) lie on the Cytoplasmic side of the membrane. A helical membrane pass occupies residues 180-200 (ITAPLCIGLTLGFLAFMGLAS). The Extracellular portion of the chain corresponds to 201 to 224 (SGGAFNPGLTFAPMAMSNTWSHFW). The NPG signature appears at 206–208 (NPG). A helical membrane pass occupies residues 225-245 (IYLGGQYLGGLTGGLLQVLVL). Topologically, residues 246–251 (YKLSSD) are cytoplasmic.

This sequence belongs to the MIP/aquaporin (TC 1.A.8) family.

It localises to the cell membrane. Water channel required to facilitate the transport of water across membranes. Involved in osmotolerance. The protein is Aquaporin (AQP) of Encephalitozoon intestinalis (Microsporidian parasite).